The chain runs to 115 residues: Large ribosomal subunit protein bL20 (115 aa).

The protein belongs to the bacterial ribosomal protein bL20 family.

Its function is as follows. Binds directly to 23S ribosomal RNA and is necessary for the in vitro assembly process of the 50S ribosomal subunit. It is not involved in the protein synthesizing functions of that subunit. This is Large ribosomal subunit protein bL20 from Myxococcus xanthus (strain DK1622).